The sequence spans 157 residues: Vitamin K-dependent protein C (157 aa).

Positions glutamate 1–valine 157 constitute a Peptidase S1 domain. Asparagine 17 carries N-linked (GlcNAc...) asparagine glycosylation. Aspartate 26 serves as the catalytic Charge relay system. A glycan (N-linked (GlcNAc...) asparagine) is linked at asparagine 78. Cystine bridges form between cysteine 96–cysteine 110 and cysteine 121–cysteine 149. The active-site Charge relay system is the serine 125.

Belongs to the peptidase S1 family. As to expression, plasma; synthesized in the liver.

The protein resides in the secreted. The protein localises to the golgi apparatus. It is found in the endoplasmic reticulum. It carries out the reaction Degradation of blood coagulation factors Va and VIIIa.. In terms of biological role, protein C is a vitamin K-dependent serine protease that regulates blood coagulation by inactivating factors Va and VIIIa in the presence of calcium ions and phospholipids. Exerts a protective effect on the endothelial cell barrier function. This Felis catus (Cat) protein is Vitamin K-dependent protein C (PROC).